A 491-amino-acid polypeptide reads, in one-letter code: Hydroxymethylglutaryl-CoA synthase (491 aa).

Glu-127 serves as the catalytic Proton donor/acceptor. Residue Cys-159 is the Acyl-thioester intermediate of the active site. (3S)-3-hydroxy-3-methylglutaryl-CoA is bound by residues Cys-159, Thr-201, and Ser-250. Ser-276 carries the post-translational modification Phosphoserine. His-296 serves as the catalytic Proton donor/acceptor. 4 residues coordinate (3S)-3-hydroxy-3-methylglutaryl-CoA: His-296, Lys-305, Asn-371, and Ser-405.

It belongs to the thiolase-like superfamily. HMG-CoA synthase family.

The catalysed reaction is acetoacetyl-CoA + acetyl-CoA + H2O = (3S)-3-hydroxy-3-methylglutaryl-CoA + CoA + H(+). The protein operates within metabolic intermediate biosynthesis; (R)-mevalonate biosynthesis; (R)-mevalonate from acetyl-CoA: step 2/3. Functionally, hydroxymethylglutaryl-CoA synthase; part of the first module of ergosterol biosynthesis pathway that includes the early steps of the pathway, conserved across all eukaryotes, and which results in the formation of mevalonate from acetyl-coenzyme A (acetyl-CoA). ERG13 condenses acetyl-CoA with acetoacetyl-CoA to form hydroxymethylglutaryl-CoA (HMG-CoA). The first module starts with the action of the cytosolic acetyl-CoA acetyltransferase ERG10 that catalyzes the formation of acetoacetyl-CoA. The hydroxymethylglutaryl-CoA synthase ERG13 then condenses acetyl-CoA with acetoacetyl-CoA to form HMG-CoA. The rate-limiting step of the early module is the reduction to mevalonate by the 3-hydroxy-3-methylglutaryl-coenzyme A (HMG-CoA) reductases HMG1 and HMG2 which are derived from a single ancestral HMGR gene by gene duplication. The sequence is that of Hydroxymethylglutaryl-CoA synthase from Saccharomyces cerevisiae (strain ATCC 204508 / S288c) (Baker's yeast).